Here is a 163-residue protein sequence, read N- to C-terminus: Oocyte-secreted protein 1 (163 aa).

An N-terminal signal peptide occupies residues 1–21 (MKPSSGLRGLLVLFSLTWTCA).

Belongs to the PLAC1 family. As to expression, oocyte-specific.

It localises to the secreted. In terms of biological role, may be involved in cell differentiation. The chain is Oocyte-secreted protein 1 (OOSP1) from Bos taurus (Bovine).